A 489-amino-acid chain; its full sequence is Zeta-carotene desaturase (489 aa).

The protein belongs to the zeta carotene desaturase family. The cofactor is NAD(+). It depends on NADP(+) as a cofactor. Requires FAD as cofactor.

The catalysed reaction is 9,9'-di-cis-zeta-carotene + 2 a quinone = 7,7',9,9'-tetra-cis-lycopene + 2 a quinol. Its pathway is carotenoid biosynthesis; lycopene biosynthesis. Functionally, catalyzes the conversion of zeta-carotene to lycopene via the intermediary of neurosporene. It carries out two consecutive desaturations (introduction of double bonds) at positions C-7 and C-7'. The polypeptide is Zeta-carotene desaturase (crtQ) (Synechocystis sp. (strain ATCC 27184 / PCC 6803 / Kazusa)).